An 837-amino-acid polypeptide reads, in one-letter code: Tuftelin-interacting protein 11 (837 aa).

Basic and acidic residues-rich tracts occupy residues 1–13 (MSLSHLYRDGEGR) and 53–64 (VWAERDSDDERP). Disordered stretches follow at residues 1 to 21 (MSLSHLYRDGEGRIDDDDDER), 53 to 72 (VWAERDSDDERPSFGGKRAR), and 85 to 133 (LKKG…KGFA). Positions 1-50 (MSLSHLYRDGEGRIDDDDDERENFEITDWDLQNEFNPNRQRHWQTKEEAT) are required for interaction with DHX15. 3 positions are modified to phosphoserine: S2, S59, and S98. Positions 91–102 (EEAELEDSDDEE) are enriched in acidic residues. A compositionally biased stretch (basic and acidic residues) spans 103 to 116 (RPVKQDDFPKDFGP). At S144 the chain carries Phosphoserine. Residues 149-195 (TKGIGQKLLQKMGYVPGRGLGKNAQGIINPIEAKQRKGKGAVGAYGS) form the G-patch domain. Residues 179–236 (IEAKQRKGKGAVGAYGSERTTQSMQDFPVVDSEEEAEEEFQKELSQWRKDPSGSKKKP) form a disordered region. S210 is modified (phosphoserine). The span at 217-231 (EFQKELSQWRKDPSG) shows a compositional bias: basic and acidic residues. Positions 700–705 (VKDKFN) match the Nuclear localization signal motif. The interval 710–734 (IMNRAVSSNVGAYMQPGARENIAYL) is required for nuclear speckle localization.

The protein belongs to the TFP11/STIP family. Identified in the spliceosome C complex. Found in the Intron Large (IL) complex, a post-mRNA release spliceosomal complex containing the excised intron, U2, U5 and U6 snRNPs, and splicing factors. Interacts with TUFT1. Interacts with DHX15; indicative for a recruitment of DHX15 to the IL complex. Interacts with GCFC2.

It localises to the cytoplasm. It is found in the nucleus. Functionally, involved in pre-mRNA splicing, specifically in spliceosome disassembly during late-stage splicing events. Intron turnover seems to proceed through reactions in two lariat-intron associated complexes termed Intron Large (IL) and Intron Small (IS). In cooperation with DHX15 seems to mediate the transition of the U2, U5 and U6 snRNP-containing IL complex to the snRNP-free IS complex leading to efficient debranching and turnover of excised introns. May play a role in the differentiation of ameloblasts and odontoblasts or in the forming of the enamel extracellular matrix. The chain is Tuftelin-interacting protein 11 (TFIP11) from Macaca mulatta (Rhesus macaque).